The primary structure comprises 488 residues: Glutamate--tRNA ligase (488 aa).

The 'HIGH' region motif lies at 16–26 (PSPTGEPHVGT). The 'KMSKS' region signature appears at 257-261 (KLSKR). ATP is bound at residue Lys-260.

It belongs to the class-I aminoacyl-tRNA synthetase family. Glutamate--tRNA ligase type 1 subfamily. In terms of assembly, monomer.

The protein localises to the cytoplasm. The enzyme catalyses tRNA(Glu) + L-glutamate + ATP = L-glutamyl-tRNA(Glu) + AMP + diphosphate. Functionally, catalyzes the attachment of glutamate to tRNA(Glu) in a two-step reaction: glutamate is first activated by ATP to form Glu-AMP and then transferred to the acceptor end of tRNA(Glu). This is Glutamate--tRNA ligase from Rhizobium etli (strain ATCC 51251 / DSM 11541 / JCM 21823 / NBRC 15573 / CFN 42).